We begin with the raw amino-acid sequence, 217 residues long: Adapter protein MecA (217 aa).

This sequence belongs to the MecA family. As to quaternary structure, homodimer.

Functionally, enables the recognition and targeting of unfolded and aggregated proteins to the ClpC protease or to other proteins involved in proteolysis. The protein is Adapter protein MecA of Listeria monocytogenes serovar 1/2a (strain ATCC BAA-679 / EGD-e).